A 1771-amino-acid polypeptide reads, in one-letter code: Kinase D-interacting substrate of 220 kDa (1771 aa).

Residues 1 to 499 are Cytoplasmic-facing; sequence MSVLISQSVI…QIEPLFQFSW (499 aa). ANK repeat units follow at residues 4–33, 37–66, 70–99, 103–132, 136–165, 169–198, 202–231, 235–264, 268–297, 301–330, 334–363, and 367–396; these read LISQSVINYVEEENIPALKALLEKCKDVDE, CGQTPLMIAAEQGNLEIVKELIKNGANCNL, DNWTALISASKEGHVHIVEELLKCGVNLEH, GGWTALMWACYKGRTDVVELLLSHGANPSV, YSVYPIIWAAGRGHADIVHLLLQNGAKVNC, YGTTPLVWAARKGHLECVKHLLAMGADVDQ, NSMTALIVAVKGGYTQSVKEILKRNPNVNL, DGNTALMIASKEGHTEIVQDLLDAGTYVNI, SGDTVLIGAVRGGHVEIVRALLQKYADIDI, DNKTALYWAVEKGNATMVRDILQCNPDTEI, DGETPLIKATKMRNIEVVELLLDKGAKVSA, and KGDTPLHIAIRGRSRKLAELLLRNPKDGRL. Residues 440-953 enclose the KAP NTPase domain; that stretch reads YDLYSSALAD…NIVSVTGRLL (514 aa). Residues 500–520 traverse the membrane as a helical segment; it reads LIVFLTLLLCGGLGLLFAFTV. The Extracellular segment spans residues 521–524; that stretch reads HPNL. A helical membrane pass occupies residues 525–545; it reads GIAVSLSFLALLYIFFIVIYF. The Cytoplasmic portion of the chain corresponds to 546–659; that stretch reads GGRREGESWN…KWKKTCCLPS (114 aa). Residues 660-680 traverse the membrane as a helical segment; that stretch reads FVIFLFIIGCIISGITLLAIF. Topologically, residues 681–685 are extracellular; the sequence is RVDPK. A helical membrane pass occupies residues 686–706; the sequence is HLTVNAVLISIASVVGLAFVL. Residues 707–1771 lie on the Cytoplasmic side of the membrane; sequence NCRTWWQVLD…GFGEERESIL (1065 aa). Phosphoserine occurs at positions 882 and 885. A Phosphothreonine modification is found at T914. Position 918 is a phosphoserine (S918). Residues 1089–1092 form a mediates interaction with CRKL region; the sequence is PRAP. S1163 is modified (phosphoserine). Disordered regions lie at residues 1182-1202, 1285-1310, 1344-1368, and 1397-1564; these read DAAEGLSSPTDSSRGSGPAPG, PEDPRFLSESSSGPAPHGEPARRASH, RHSNLSWQSQTRRTPSLSSLNSQDS, and LEGG…EPIR. A phosphoserine mark is found at S1296, S1352, S1359, S1361, S1362, and S1365. Over residues 1346–1358 the composition is skewed to polar residues; sequence SNLSWQSQTRRTP. The span at 1359–1368 shows a compositional bias: low complexity; the sequence is SLSSLNSQDS. The segment covering 1403 to 1430 has biased composition (polar residues); that stretch reads STTISGRSSPHSTYYMGQSSSGGSIHSN. A compositionally biased stretch (basic and acidic residues) spans 1431 to 1457; the sequence is LEQEKGKDSEPKPDDGRKSFLMKRGDV. The segment covering 1460 to 1470 has biased composition (polar residues); that stretch reads YSSSGVSTNDA. Residues S1521, S1526, S1555, and S1574 each carry the phosphoserine modification. Residues 1522-1532 show a composition bias toward acidic residues; the sequence is DEDESGTEESD. Over residues 1537 to 1561 the composition is skewed to basic and acidic residues; that stretch reads LKDDKDRKAEGKVERVPKSPEHSAE. The segment at 1578 to 1633 is disordered; that stretch reads LDKKDSSDSGVRSSESSPNHSLHNEVADDSQLEKANLIELEDDSHSGKRGIPHSLS. The span at 1585 to 1594 shows a compositional bias: low complexity; sequence DSGVRSSESS. Phosphoserine is present on residues S1623 and S1633. T1679 carries the phosphothreonine modification. S1681 bears the Phosphoserine mark. Position 1684 is a phosphothreonine (T1684). The segment covering 1713 to 1731 has biased composition (polar residues); sequence LRPSSSPNPTTIQNENLKS. The tract at residues 1713–1771 is disordered; the sequence is LRPSSSPNPTTIQNENLKSMTHKRSQRSSYTRLSKDPPELHAAASSESTGFGEERESIL. The PDZ-binding motif lies at 1766 to 1771; sequence ERESIL.

In terms of assembly, found in a complex, at least composed of KIDINS220, MAGI2, NTRK1 and RAPGEF2; the complex is mainly formed at late endosomes in a nerve growth factor (NGF)-dependent manner. Interacts with RAPGEF2; the interaction is strengthened after NGF stimulation. Isoform 2 interacts (via C-terminal domain) with MAGI2 isoform 1 (via PDZ domain). Interacts with NTRK1, NTRK2, NTRK3, ERKL and NGFR. Can form a ternary complex with NGFR and NTRK1 and this complex is affected by the expression levels of KIDINS220/ARMS. An increase in KIDINS220/ARMS expression leads to a decreased association of NGFR and NTRK1. Interacts (via PDZ-binding motif) with SNTA1 and SNTB2 (via PDZ domains). Interacts with EPHA4 and PRKD1. Tyrosine phosphorylated by NTRK1, NTRK2, EPHB2 and EPHA4. Phosphorylation at Ser-918 is induced by phorbol ester treatment. Phosphorylation by NTRK2 is induced by brain-derived neurotrophic factor (BDNF) and neurotrophin-4/5. Phosphorylation by NTRK1 is induced by nerve growth factor (NGF). Abundant in developing and adult neural tissues as well as neuroendocrine cells and dendritic cells. Overexpressed in melanoma and melanoma cell lines.

The protein localises to the membrane. It is found in the late endosome. Its function is as follows. Promotes a prolonged MAP-kinase signaling by neurotrophins through activation of a Rap1-dependent mechanism. Provides a docking site for the CRKL-C3G complex, resulting in Rap1-dependent sustained ERK activation. May play an important role in regulating postsynaptic signal transduction through the syntrophin-mediated localization of receptor tyrosine kinases such as EPHA4. In cooperation with SNTA1 can enhance EPHA4-induced JAK/STAT activation. Plays a role in nerve growth factor (NGF)-induced recruitment of RAPGEF2 to late endosomes and neurite outgrowth. May play a role in neurotrophin- and ephrin-mediated neuronal outgrowth and in axon guidance during neural development and in neuronal regeneration. Modulates stress-induced apoptosis of melanoma cells via regulation of the MEK/ERK signaling pathway. In Homo sapiens (Human), this protein is Kinase D-interacting substrate of 220 kDa (KIDINS220).